Consider the following 154-residue polypeptide: 6,7-dimethyl-8-ribityllumazine synthase (154 aa).

5-amino-6-(D-ribitylamino)uracil-binding positions include phenylalanine 21, 55–57 (AFE), and 79–81 (CVI). 84–85 (AT) contributes to the (2S)-2-hydroxy-3-oxobutyl phosphate binding site. Histidine 87 serves as the catalytic Proton donor. Phenylalanine 111 lines the 5-amino-6-(D-ribitylamino)uracil pocket. A (2S)-2-hydroxy-3-oxobutyl phosphate-binding site is contributed by arginine 125.

The protein belongs to the DMRL synthase family. Forms an icosahedral capsid composed of 60 subunits, arranged as a dodecamer of pentamers.

It catalyses the reaction (2S)-2-hydroxy-3-oxobutyl phosphate + 5-amino-6-(D-ribitylamino)uracil = 6,7-dimethyl-8-(1-D-ribityl)lumazine + phosphate + 2 H2O + H(+). It functions in the pathway cofactor biosynthesis; riboflavin biosynthesis; riboflavin from 2-hydroxy-3-oxobutyl phosphate and 5-amino-6-(D-ribitylamino)uracil: step 1/2. In terms of biological role, catalyzes the formation of 6,7-dimethyl-8-ribityllumazine by condensation of 5-amino-6-(D-ribitylamino)uracil with 3,4-dihydroxy-2-butanone 4-phosphate. This is the penultimate step in the biosynthesis of riboflavin. The sequence is that of 6,7-dimethyl-8-ribityllumazine synthase from Macrococcus caseolyticus (strain JCSC5402) (Macrococcoides caseolyticum).